Reading from the N-terminus, the 331-residue chain is Vitamin B12 import system permease protein BtuC (331 aa).

Transmembrane regions (helical) follow at residues 18 to 38, 64 to 84, 91 to 111, 114 to 134, 149 to 169, 194 to 214, 243 to 263, 277 to 297, and 305 to 325; these read WLFGLTLLLLVTLLISLCAGE, LAVLLVGAALALSGAIMQALF, PGLLGISNGAGVGLIAAVLLG, VLPGWALGLCAIFGALLITFI, LLAGVALGIICSALMTWAVYF, LWLMIALLPVLCWVCLQSQPL, GWMVGVSVALAGAIGFIGLVI, VLLPACMMAGASALLGADIIA, and ELPIGVVTATLGAPVFIWLLL.

The protein belongs to the binding-protein-dependent transport system permease family. FecCD subfamily. As to quaternary structure, the complex is composed of two ATP-binding proteins (BtuD), two transmembrane proteins (BtuC) and a solute-binding protein (BtuF).

It is found in the cell inner membrane. Functionally, part of the ABC transporter complex BtuCDF involved in vitamin B12 import. Involved in the translocation of the substrate across the membrane. This is Vitamin B12 import system permease protein BtuC from Klebsiella pneumoniae subsp. pneumoniae (strain ATCC 700721 / MGH 78578).